The chain runs to 257 residues: Flap endonuclease Xni (257 aa).

Residue D109 participates in Mg(2+) binding. Positions 165–254 constitute a 5'-3' exonuclease domain; the sequence is VKPEQLADYW…GFNLQDIRYE (90 aa). The K(+) site is built by L176, P185, I187, and I190. The tract at residues 189–194 is interaction with DNA; that stretch reads GIGPKA.

It belongs to the Xni family. The cofactor is Mg(2+). It depends on K(+) as a cofactor.

Its function is as follows. Has flap endonuclease activity. During DNA replication, flap endonucleases cleave the 5'-overhanging flap structure that is generated by displacement synthesis when DNA polymerase encounters the 5'-end of a downstream Okazaki fragment. This is Flap endonuclease Xni from Vibrio atlanticus (strain LGP32) (Vibrio splendidus (strain Mel32)).